The primary structure comprises 356 residues: Nicotinate-nucleotide--dimethylbenzimidazole phosphoribosyltransferase (356 aa).

The active-site Proton acceptor is the glutamate 317.

This sequence belongs to the CobT family. Homodimer.

The catalysed reaction is 5,6-dimethylbenzimidazole + nicotinate beta-D-ribonucleotide = alpha-ribazole 5'-phosphate + nicotinate + H(+). The protein operates within nucleoside biosynthesis; alpha-ribazole biosynthesis; alpha-ribazole from 5,6-dimethylbenzimidazole: step 1/2. Its function is as follows. Catalyzes the synthesis of alpha-ribazole-5'-phosphate from nicotinate mononucleotide (NAMN) and 5,6-dimethylbenzimidazole (DMB). This chain is Nicotinate-nucleotide--dimethylbenzimidazole phosphoribosyltransferase, found in Salmonella gallinarum (strain 287/91 / NCTC 13346).